A 917-amino-acid polypeptide reads, in one-letter code: Probable dipeptidyl-aminopeptidase B (917 aa).

Residues 1–78 are disordered; that stretch reads MGVEKRINDE…EGDLEEGFVP (78 aa). Residues 1–90 lie on the Cytoplasmic side of the membrane; it reads MGVEKRINDE…GGWSAPRKVS (90 aa). Residues 16–26 are compositionally biased toward basic and acidic residues; the sequence is AERDDKSRDSI. Low complexity predominate over residues 27 to 49; it reads DSTSTASISLALLGGANGSAHGS. The segment covering 55–65 has biased composition (basic and acidic residues); that stretch reads RKSENQEKYHD. Residues 91-111 form a helical; Signal-anchor for type II membrane protein membrane-spanning segment; the sequence is VIFTLIVTLCIAGWLVAFFVL. Residues 112–917 are Vacuolar-facing; it reads LGRHKDSSKD…LGLINILRNG (806 aa). 2 N-linked (GlcNAc...) asparagine glycosylation sites follow: Asn350 and Asn465. Residue Ser754 is the Charge relay system of the active site. Residue Asn813 is glycosylated (N-linked (GlcNAc...) asparagine). Residues Asp831 and His864 each act as charge relay system in the active site.

The protein belongs to the peptidase S9B family.

The protein localises to the vacuole membrane. The enzyme catalyses Release of an N-terminal dipeptide, Xaa-Yaa-|-Zaa-, from a polypeptide, preferentially when Yaa is Pro, provided Zaa is neither Pro nor hydroxyproline.. In terms of biological role, type IV dipeptidyl-peptidase which removes N-terminal dipeptides sequentially from polypeptides having unsubstituted N-termini provided that the penultimate residue is proline. The polypeptide is Probable dipeptidyl-aminopeptidase B (DAPB) (Coccidioides posadasii (strain C735) (Valley fever fungus)).